Consider the following 62-residue polypeptide: Temporin-La (62 aa).

Residues 1–22 form the signal peptide; sequence MFPLKKSLLLLFFLGTINLSFC. The propeptide occupies 23 to 47; the sequence is EEERDVDQDERRDDPGERNVQVEKR. At L60 the chain carries Leucine amide.

The protein belongs to the frog skin active peptide (FSAP) family. Temporin subfamily. As to expression, expressed by the skin glands.

The protein localises to the secreted. The protein resides in the target cell membrane. Antimicrobial peptide with amphipathic alpha-helical structure that acts against both Gram-positive and Gram-negative bacteria and the fungus Candida albicans. Is active against S.aureus ATCC 25923 (MIC=2.5 ug/ml), S.suis 2 CVCC 606 (MIC=15.6 ug/ml), Salmonella ATCC 20020 (MIC=15.6 ug/ml), P.aeruginosa ATCC 227853 (MIC=60 ug/ml), and C.albicans ATCC10231 (MIC=31.25 ug/ml). Is not active against B.subtilis ADB403, E.coli ATCC 25922, and K.pneumoniae ATCC 700603. Also shows a strong antitumor activity, but no hemolytic activity. This chain is Temporin-La, found in Aquarana catesbeiana (American bullfrog).